We begin with the raw amino-acid sequence, 693 residues long: Polyribonucleotide nucleotidyltransferase (693 aa).

Positions 489 and 495 each coordinate Mg(2+). Residues 556–615 (PQIHVMNINPAKIKDVVGRGGATVKGIVEKTGAQIDTSDSGEVKVFAKDKKSMDMAVAMI) form the KH domain. Positions 625–693 (GQVYKGKIVK…GRVKLSLVAR (69 aa)) constitute an S1 motif domain.

This sequence belongs to the polyribonucleotide nucleotidyltransferase family. As to quaternary structure, component of the RNA degradosome, which is a multiprotein complex involved in RNA processing and mRNA degradation. It depends on Mg(2+) as a cofactor.

The protein localises to the cytoplasm. It catalyses the reaction RNA(n+1) + phosphate = RNA(n) + a ribonucleoside 5'-diphosphate. Its function is as follows. Involved in mRNA degradation. Catalyzes the phosphorolysis of single-stranded polyribonucleotides processively in the 3'- to 5'-direction. The protein is Polyribonucleotide nucleotidyltransferase of Francisella tularensis subsp. holarctica (strain OSU18).